The following is a 32-amino-acid chain: Photosystem II reaction center protein T (32 aa).

A helical transmembrane segment spans residues 3 to 23; sequence ALVYVFLLIGTLMIIFFAIFF.

The protein belongs to the PsbT family. In terms of assembly, PSII is composed of 1 copy each of membrane proteins PsbA, PsbB, PsbC, PsbD, PsbE, PsbF, PsbH, PsbI, PsbJ, PsbK, PsbL, PsbM, PsbT, PsbY, PsbZ, Psb30/Ycf12, at least 3 peripheral proteins of the oxygen-evolving complex and a large number of cofactors. It forms dimeric complexes.

It localises to the plastid. The protein resides in the chloroplast thylakoid membrane. Found at the monomer-monomer interface of the photosystem II (PS II) dimer, plays a role in assembly and dimerization of PSII. PSII is a light-driven water plastoquinone oxidoreductase, using light energy to abstract electrons from H(2)O, generating a proton gradient subsequently used for ATP formation. This chain is Photosystem II reaction center protein T, found in Cyanidioschyzon merolae (strain NIES-3377 / 10D) (Unicellular red alga).